We begin with the raw amino-acid sequence, 166 residues long: Crossover junction endodeoxyribonuclease RuvC (166 aa).

Active-site residues include Asp11, Glu70, and Asp142. Asp11, Glu70, and Asp142 together coordinate Mg(2+).

It belongs to the RuvC family. As to quaternary structure, homodimer which binds Holliday junction (HJ) DNA. The HJ becomes 2-fold symmetrical on binding to RuvC with unstacked arms; it has a different conformation from HJ DNA in complex with RuvA. In the full resolvosome a probable DNA-RuvA(4)-RuvB(12)-RuvC(2) complex forms which resolves the HJ. Requires Mg(2+) as cofactor.

It is found in the cytoplasm. The catalysed reaction is Endonucleolytic cleavage at a junction such as a reciprocal single-stranded crossover between two homologous DNA duplexes (Holliday junction).. Functionally, the RuvA-RuvB-RuvC complex processes Holliday junction (HJ) DNA during genetic recombination and DNA repair. Endonuclease that resolves HJ intermediates. Cleaves cruciform DNA by making single-stranded nicks across the HJ at symmetrical positions within the homologous arms, yielding a 5'-phosphate and a 3'-hydroxyl group; requires a central core of homology in the junction. The consensus cleavage sequence is 5'-(A/T)TT(C/G)-3'. Cleavage occurs on the 3'-side of the TT dinucleotide at the point of strand exchange. HJ branch migration catalyzed by RuvA-RuvB allows RuvC to scan DNA until it finds its consensus sequence, where it cleaves and resolves the cruciform DNA. The sequence is that of Crossover junction endodeoxyribonuclease RuvC from Nitratidesulfovibrio vulgaris (strain DP4) (Desulfovibrio vulgaris).